Reading from the N-terminus, the 193-residue chain is Holliday junction branch migration complex subunit RuvA (193 aa).

The domain I stretch occupies residues methionine 1–leucine 64. The interval threonine 65–leucine 139 is domain II. The flexible linker stretch occupies residues leucine 139–alanine 143. Residues serine 144–alanine 193 form a domain III region.

This sequence belongs to the RuvA family. Homotetramer. Forms an RuvA(8)-RuvB(12)-Holliday junction (HJ) complex. HJ DNA is sandwiched between 2 RuvA tetramers; dsDNA enters through RuvA and exits via RuvB. An RuvB hexamer assembles on each DNA strand where it exits the tetramer. Each RuvB hexamer is contacted by two RuvA subunits (via domain III) on 2 adjacent RuvB subunits; this complex drives branch migration. In the full resolvosome a probable DNA-RuvA(4)-RuvB(12)-RuvC(2) complex forms which resolves the HJ.

Its subcellular location is the cytoplasm. Functionally, the RuvA-RuvB-RuvC complex processes Holliday junction (HJ) DNA during genetic recombination and DNA repair, while the RuvA-RuvB complex plays an important role in the rescue of blocked DNA replication forks via replication fork reversal (RFR). RuvA specifically binds to HJ cruciform DNA, conferring on it an open structure. The RuvB hexamer acts as an ATP-dependent pump, pulling dsDNA into and through the RuvAB complex. HJ branch migration allows RuvC to scan DNA until it finds its consensus sequence, where it cleaves and resolves the cruciform DNA. This chain is Holliday junction branch migration complex subunit RuvA, found in Burkholderia vietnamiensis (strain G4 / LMG 22486) (Burkholderia cepacia (strain R1808)).